The chain runs to 675 residues: Potassium-transporting ATPase ATP-binding subunit (675 aa).

4 helical membrane-spanning segments follow: residues 34-54 (IMFVVEVGMILTLILICFPDI), 65-85 (LITIFIILLITILFANFSEAF), 216-236 (IALFTLLTTLTIIFLVVIVTL), and 245-265 (LILPIAMLIALTVCLIPTTIG). D304 acts as the 4-aspartylphosphate intermediate in catalysis. ATP contacts are provided by residues D341, E345, 372 to 379 (FTAETRMS), and K390. Residues D513 and D517 each contribute to the Mg(2+) site. Transmembrane regions (helical) follow at residues 569-591 (ALTTFSLANDVAKYFAILPALMM), 611-631 (AIISALIFNALIIVALIPIAM), and 644-664 (IFINNMLIYGLGGLIVPFLGI).

Belongs to the cation transport ATPase (P-type) (TC 3.A.3) family. Type IA subfamily. The system is composed of three essential subunits: KdpA, KdpB and KdpC.

The protein localises to the cell membrane. It carries out the reaction K(+)(out) + ATP + H2O = K(+)(in) + ADP + phosphate + H(+). Functionally, part of the high-affinity ATP-driven potassium transport (or Kdp) system, which catalyzes the hydrolysis of ATP coupled with the electrogenic transport of potassium into the cytoplasm. This subunit is responsible for energy coupling to the transport system and for the release of the potassium ions to the cytoplasm. This Staphylococcus aureus (strain bovine RF122 / ET3-1) protein is Potassium-transporting ATPase ATP-binding subunit.